Here is a 428-residue protein sequence, read N- to C-terminus: Cell number regulator 13 (428 aa).

Basic and acidic residues predominate over residues 233–280 (PEKETNVKAPEKKGSNYSESKGETAKSFDDDDDYPKKQNGDYPKKQKD). A disordered region spans residues 233–290 (PEKETNVKAPEKKGSNYSESKGETAKSFDDDDDYPKKQNGDYPKKQKDTCSTQRCSSQ). Over residues 281–290 (TCSTQRCSSQ) the composition is skewed to polar residues. Residues 354–370 (IMAYSLILSCCCYTCCV) form a helical membrane-spanning segment.

Expressed in roots, coleoptiles, leaves, stalks, apical meristems, immature ears, embryos, endosperm, pericarp, silks and tassel spikelets. Not detected in pollen.

Its subcellular location is the membrane. In Zea mays (Maize), this protein is Cell number regulator 13 (CNR13).